Here is a 374-residue protein sequence, read N- to C-terminus: Chaperone protein DnaJ (374 aa).

The region spanning serine 4–glycine 69 is the J domain. The CR-type zinc-finger motif lies at glycine 136–lysine 213. Zn(2+) contacts are provided by cysteine 149, cysteine 152, cysteine 165, cysteine 168, cysteine 187, cysteine 190, cysteine 201, and cysteine 204. 4 CXXCXGXG motif repeats span residues cysteine 149–glycine 156, cysteine 165–glycine 172, cysteine 187–glycine 194, and cysteine 201–glycine 208.

The protein belongs to the DnaJ family. In terms of assembly, homodimer. The cofactor is Zn(2+).

The protein resides in the cytoplasm. In terms of biological role, participates actively in the response to hyperosmotic and heat shock by preventing the aggregation of stress-denatured proteins and by disaggregating proteins, also in an autonomous, DnaK-independent fashion. Unfolded proteins bind initially to DnaJ; upon interaction with the DnaJ-bound protein, DnaK hydrolyzes its bound ATP, resulting in the formation of a stable complex. GrpE releases ADP from DnaK; ATP binding to DnaK triggers the release of the substrate protein, thus completing the reaction cycle. Several rounds of ATP-dependent interactions between DnaJ, DnaK and GrpE are required for fully efficient folding. Also involved, together with DnaK and GrpE, in the DNA replication of plasmids through activation of initiation proteins. In Campylobacter jejuni subsp. doylei (strain ATCC BAA-1458 / RM4099 / 269.97), this protein is Chaperone protein DnaJ.